The primary structure comprises 511 residues: Probable G-protein coupled receptor 152 (511 aa).

The interval 1–20 (MDTAVEANLGAAGHGPRTEL) is disordered. The Extracellular portion of the chain corresponds to 1–33 (MDTAVEANLGAAGHGPRTELSDEDYYPQGSWDT). Residues 34 to 54 (VFLVALLLLGLPANGLMAWLA) traverse the membrane as a helical segment. The Cytoplasmic portion of the chain corresponds to 55 to 65 (GSQARHGAGTR). The helical transmembrane segment at 66-86 (LALLLLSLALSDFLFLAAATF) threads the bilayer. Over 87 to 105 (QILEIQHGGHWPLGTAACR) the chain is Extracellular. Cys-104 and Cys-182 are oxidised to a cystine. Residues 106-126 (FYYFLWGVSYSSGLFLLTALS) traverse the membrane as a helical segment. The Cytoplasmic segment spans residues 127 to 148 (LDRCLLALCPRWYPGHRPARLP). Residues 149–169 (LWVCAGVWVLATLFSVPWLVF) form a helical membrane-spanning segment. Residues 170–194 (PEAAVWWYDLVICLDFWDTEELPLR) are Extracellular-facing. The chain crosses the membrane as a helical span at residues 195–215 (MLEILGGFLPFLLLLVCHVLT). The Cytoplasmic segment spans residues 216-258 (QATACRTCCGHQPRRMACHGFARVAKTILSAYVVLRLPYQLAQ). The chain crosses the membrane as a helical span at residues 259-279 (LLYLAFLWDVYPGYLLWEALV). At 280-282 (YSD) the chain is on the extracellular side. A helical transmembrane segment spans residues 283-303 (YLILLNSCLSPFLCLAASADL). The Cytoplasmic segment spans residues 304 to 511 (RALLRTVLSS…PEEAPSAGPT (208 aa)). Disordered regions lie at residues 328–349 (PAEP…DSVV), 361–386 (SDSV…PTVG), and 407–511 (PQLD…AGPT). 2 stretches are compositionally biased toward polar residues: residues 335–345 (PGPTSEGQSRL) and 369–386 (VSPS…PTVG). The span at 419-433 (PSAQPQSKSVVQPQV) shows a compositional bias: low complexity. Composition is skewed to polar residues over residues 435–453 (PLTQ…NTET) and 462–473 (SASNPGEENSSG).

It belongs to the G-protein coupled receptor 1 family.

It is found in the cell membrane. Orphan receptor. The protein is Probable G-protein coupled receptor 152 (Gpr152) of Mus musculus (Mouse).